The chain runs to 313 residues: Ribosomal RNA small subunit methyltransferase H (313 aa).

S-adenosyl-L-methionine is bound by residues 35–37 (GGH), aspartate 55, phenylalanine 79, aspartate 100, and glutamine 107.

This sequence belongs to the methyltransferase superfamily. RsmH family.

The protein localises to the cytoplasm. The catalysed reaction is cytidine(1402) in 16S rRNA + S-adenosyl-L-methionine = N(4)-methylcytidine(1402) in 16S rRNA + S-adenosyl-L-homocysteine + H(+). Specifically methylates the N4 position of cytidine in position 1402 (C1402) of 16S rRNA. The chain is Ribosomal RNA small subunit methyltransferase H from Burkholderia mallei (strain NCTC 10247).